The following is a 252-amino-acid chain: MNILLTNDDGIEAEGINTLAELLSKYHDVIMVAPENQRSASSHSITIYEPIIVKQVKKPYNIEAYSISGTPADCVRVALDKLVPDNIDMVISGINKGLNIGNDILYSGTVSAAIEGAMYKVPSMAVSAQFIKNKKENYKIAAKYALRMLNRLKKEDLKNDVVLNLNIPFCSEEEIKGIKVCKVGNKIFNTRFSEEIDEEGNKVLKLEGDINKDIYEGTDVYYIRNKYVTLTPLHYDLTNFNILEETEQLFLS.

4 residues coordinate a divalent metal cation: Asp8, Asp9, Ser39, and Asn95.

This sequence belongs to the SurE nucleotidase family. A divalent metal cation is required as a cofactor.

The protein resides in the cytoplasm. It catalyses the reaction a ribonucleoside 5'-phosphate + H2O = a ribonucleoside + phosphate. Functionally, nucleotidase that shows phosphatase activity on nucleoside 5'-monophosphates. This chain is 5'-nucleotidase SurE, found in Clostridium botulinum (strain ATCC 19397 / Type A).